A 253-amino-acid polypeptide reads, in one-letter code: Electron transfer flavoprotein subunit beta, mitochondrial (253 aa).

Belongs to the ETF beta-subunit/FixA family. Heterodimer of an alpha and a beta subunit. The cofactor is FAD. Requires AMP as cofactor.

It localises to the mitochondrion matrix. In terms of biological role, the electron transfer flavoprotein serves as a specific electron acceptor for several dehydrogenases, including five acyl-CoA dehydrogenases, glutaryl-CoA and sarcosine dehydrogenase. It transfers the electrons to the main mitochondrial respiratory chain via ETF-ubiquinone oxidoreductase (ETF dehydrogenase). The chain is Electron transfer flavoprotein subunit beta, mitochondrial (ETFB) from Oryza sativa subsp. indica (Rice).